A 373-amino-acid polypeptide reads, in one-letter code: Nuclear hormone receptor family member nhr-69 (373 aa).

A DNA-binding region (nuclear receptor) is located at residues glutamate 3–asparagine 78. 2 consecutive NR C4-type zinc fingers follow at residues cysteine 6–cysteine 26 and cysteine 42–cysteine 66. Residues glutamate 93–aspartate 344 enclose the NR LBD domain.

This sequence belongs to the nuclear hormone receptor family. In terms of assembly, interacts with R-SMAD daf-8. As to expression, expressed in the ASI neurons, hypodermis, and in tail neurons.

Its subcellular location is the nucleus. Functionally, orphan nuclear receptor which, in cooperation with R-SMAD daf-8, modulates the Insulin/IGF-1-like signaling (IIS) pathway, perhaps by regulating expression of the potassium channel exp-2, which in turn modulates the secretion of insulin-like peptide daf-28. The sequence is that of Nuclear hormone receptor family member nhr-69 (nhr-69) from Caenorhabditis elegans.